The primary structure comprises 164 residues: Anterior gradient protein 3 (164 aa).

The signal sequence occupies residues 1 to 19 (MYFPMIELTLVLLASSNLA). A Prevents secretion from ER motif is present at residues 161–164 (QTEL).

This sequence belongs to the AGR family.

The protein resides in the endoplasmic reticulum. It is found in the cytoplasm. Required for calcium-mediated regulation of ciliary beat frequency in the airway. The polypeptide is Anterior gradient protein 3 (Xenopus tropicalis (Western clawed frog)).